Reading from the N-terminus, the 463-residue chain is Asparagine--tRNA ligase (463 aa).

It belongs to the class-II aminoacyl-tRNA synthetase family. Homodimer.

The protein resides in the cytoplasm. The enzyme catalyses tRNA(Asn) + L-asparagine + ATP = L-asparaginyl-tRNA(Asn) + AMP + diphosphate + H(+). In Bacillus cereus (strain ATCC 10987 / NRS 248), this protein is Asparagine--tRNA ligase.